Reading from the N-terminus, the 162-residue chain is Ribosomal RNA large subunit methyltransferase H (162 aa).

G108 serves as a coordination point for S-adenosyl-L-methionine.

It belongs to the RNA methyltransferase RlmH family. As to quaternary structure, homodimer.

It localises to the cytoplasm. It carries out the reaction pseudouridine(1915) in 23S rRNA + S-adenosyl-L-methionine = N(3)-methylpseudouridine(1915) in 23S rRNA + S-adenosyl-L-homocysteine + H(+). Its function is as follows. Specifically methylates the pseudouridine at position 1915 (m3Psi1915) in 23S rRNA. The sequence is that of Ribosomal RNA large subunit methyltransferase H from Methylobacterium sp. (strain 4-46).